Here is a 108-residue protein sequence, read N- to C-terminus: uncharacterized protein (108 aa).

A disordered region spans residues 1–23 (MVDELEKNQVQPQETEENKENAL).

This is an uncharacterized protein from Ureaplasma parvum serovar 3 (strain ATCC 700970).